The following is an 89-amino-acid chain: UPF0237 protein lin0537 (89 aa).

The 75-residue stretch at 4 to 78 (VLTVIGKDNV…EELQVKIHIQ (75 aa)) folds into the ACT domain.

It belongs to the UPF0237 family.

In Listeria innocua serovar 6a (strain ATCC BAA-680 / CLIP 11262), this protein is UPF0237 protein lin0537.